The following is a 170-amino-acid chain: Peptide deformylase (170 aa).

Residues Cys91 and His133 each contribute to the Fe cation site. Glu134 is an active-site residue. Residue His137 participates in Fe cation binding.

Belongs to the polypeptide deformylase family. The cofactor is Fe(2+).

It catalyses the reaction N-terminal N-formyl-L-methionyl-[peptide] + H2O = N-terminal L-methionyl-[peptide] + formate. In terms of biological role, removes the formyl group from the N-terminal Met of newly synthesized proteins. Requires at least a dipeptide for an efficient rate of reaction. N-terminal L-methionine is a prerequisite for activity but the enzyme has broad specificity at other positions. The protein is Peptide deformylase of Pasteurella multocida (strain Pm70).